A 229-amino-acid chain; its full sequence is 1-(5-phosphoribosyl)-5-[(5-phosphoribosylamino)methylideneamino] imidazole-4-carboxamide isomerase (229 aa).

The active-site Proton acceptor is Asp-8. The active-site Proton donor is Asp-125.

The protein belongs to the HisA/HisF family.

The protein localises to the cytoplasm. It catalyses the reaction 1-(5-phospho-beta-D-ribosyl)-5-[(5-phospho-beta-D-ribosylamino)methylideneamino]imidazole-4-carboxamide = 5-[(5-phospho-1-deoxy-D-ribulos-1-ylimino)methylamino]-1-(5-phospho-beta-D-ribosyl)imidazole-4-carboxamide. It functions in the pathway amino-acid biosynthesis; L-histidine biosynthesis; L-histidine from 5-phospho-alpha-D-ribose 1-diphosphate: step 4/9. In Thermococcus onnurineus (strain NA1), this protein is 1-(5-phosphoribosyl)-5-[(5-phosphoribosylamino)methylideneamino] imidazole-4-carboxamide isomerase.